Here is a 340-residue protein sequence, read N- to C-terminus: Glyceraldehyde-3-phosphate dehydrogenase (340 aa).

NAD(+) contacts are provided by residues 11-12 (TI) and Gly-109. A disulfide bond links Cys-123 and Cys-149. 138-140 (SCN) contacts D-glyceraldehyde 3-phosphate. Cys-139 serves as the catalytic Nucleophile. NAD(+) is bound at residue Arg-167. Position 193–194 (193–194 (HA)) interacts with D-glyceraldehyde 3-phosphate. Position 300 (Gln-300) interacts with NAD(+).

This sequence belongs to the glyceraldehyde-3-phosphate dehydrogenase family. In terms of assembly, homotetramer.

It is found in the cytoplasm. The catalysed reaction is D-glyceraldehyde 3-phosphate + phosphate + NADP(+) = (2R)-3-phospho-glyceroyl phosphate + NADPH + H(+). It catalyses the reaction D-glyceraldehyde 3-phosphate + phosphate + NAD(+) = (2R)-3-phospho-glyceroyl phosphate + NADH + H(+). It functions in the pathway carbohydrate degradation; glycolysis; pyruvate from D-glyceraldehyde 3-phosphate: step 1/5. Its function is as follows. Can use both NAD and NADP as cofactors, but exhibits a marked preference for NADP. The polypeptide is Glyceraldehyde-3-phosphate dehydrogenase (gap) (Saccharolobus solfataricus (strain ATCC 35092 / DSM 1617 / JCM 11322 / P2) (Sulfolobus solfataricus)).